We begin with the raw amino-acid sequence, 36 residues long: Conotoxin Cal6.1h (36 aa).

The propeptide occupies 1–7 (GLGRPSR). Disulfide bonds link cysteine 9-cysteine 25, cysteine 16-cysteine 29, and cysteine 24-cysteine 34.

Belongs to the conotoxin O1 superfamily. Expressed by the venom duct.

The protein resides in the secreted. Probable neurotoxin with unknown target. Possibly targets ion channels. This chain is Conotoxin Cal6.1h, found in Californiconus californicus (California cone).